Consider the following 129-residue polypeptide: Protein Turandot A (129 aa).

The signal sequence occupies residues 1 to 21 (MNSSTALMCFALLLISPLCMG). The N-linked (GlcNAc...) asparagine glycan is linked to Asn-49.

The protein belongs to the Turandot family. In terms of tissue distribution, expressed in the fat body (at protein level).

The protein localises to the secreted. Its function is as follows. A humoral factor that plays a role in stress tolerance; gives increased resistance to the lethal effects of bacterial challenge and stress. Regulated by the JAK/STAT pathway and NF-KB-like Relish pathway in the fat body, upd3 in the hemocytes and Mekk1 in response to septic injury and consequent immune response. In Drosophila melanogaster (Fruit fly), this protein is Protein Turandot A.